Reading from the N-terminus, the 62-residue chain is Large ribosomal subunit protein bL28 (62 aa).

This sequence belongs to the bacterial ribosomal protein bL28 family.

In Staphylococcus haemolyticus (strain JCSC1435), this protein is Large ribosomal subunit protein bL28.